The primary structure comprises 167 residues: MMFTYVVAVASVVALTSAYPTGAPPSACFDMIPGHAADVQTVPAPYTITTAVSSVKAGHSIDVVISGKTPEDKMAGILLEARQGDKIVGTWTVSPDDTFSQPLNCGEPNNAVTHKMHAKELDRQTVSYPWTAPKDLEGDVVFKVTIVKSYAVFWVGIESAPVKVLSH.

Positions Met1–Ala18 are cleaved as a signal peptide. Residues Tyr19–His167 form the Reelin domain. The cysteines at positions 28 and 105 are disulfide-linked.

This sequence belongs to the insect defense protein family. In terms of tissue distribution, in larvae, high expression in the fat body and low expression in midgut, hemocytes and malpighian tubules. No expression in silkgland.

Its subcellular location is the secreted. May have antimicrobial activity. The sequence is that of Putative defense protein Hdd11-like from Samia ricini (Indian eri silkmoth).